A 260-amino-acid polypeptide reads, in one-letter code: MAKLCAHQVSVVYASRRGALTALENVSMSVGGNEIVVALGASGCGKSTLLSLLAGFQPPTSGRVSVDGAPVTGPGADRGVVFQDDALMPWLNVIDNVAFGLRMQGVGRDARNARARDVLRLVKLAGFEQHRIDEISGGMRQRVGLARALAADPSFLLMDEPLGALDALTREHMQTLLLDVWRETGKGVFLITHSVEEAVLLATELLILSPRPGRIVARHSLDFARRYAAGESMRSIKSDPRFTEIHLALVEQLMRETEEV.

The ABC transporter domain maps to 6 to 235; the sequence is AHQVSVVYAS…RYAAGESMRS (230 aa). 40–47 provides a ligand contact to ATP; sequence GASGCGKS.

Belongs to the ABC transporter superfamily. Taurine importer (TC 3.A.1.17.1) family. The complex is composed of two ATP-binding proteins (TauB), two transmembrane proteins (TauC) and a solute-binding protein (TauA).

It is found in the cell inner membrane. The catalysed reaction is taurine(out) + ATP + H2O = taurine(in) + ADP + phosphate + H(+). Part of the ABC transporter complex TauABC involved in taurine import. Responsible for energy coupling to the transport system. In Burkholderia thailandensis (strain ATCC 700388 / DSM 13276 / CCUG 48851 / CIP 106301 / E264), this protein is Taurine import ATP-binding protein TauB.